The following is a 393-amino-acid chain: S-adenosylmethionine synthase (393 aa).

ATP is bound at residue H17. Residue D19 participates in Mg(2+) binding. E45 is a binding site for K(+). 2 residues coordinate L-methionine: E58 and Q106. Positions 106–116 (QSAHIAQGVDA) are flexible loop. Residues 171–173 (DAK), D246, 252–253 (RK), A269, and K273 contribute to the ATP site. An L-methionine-binding site is contributed by D246. Residue K277 coordinates L-methionine.

It belongs to the AdoMet synthase family. Homotetramer; dimer of dimers. Mg(2+) serves as cofactor. K(+) is required as a cofactor.

It localises to the cytoplasm. The catalysed reaction is L-methionine + ATP + H2O = S-adenosyl-L-methionine + phosphate + diphosphate. It functions in the pathway amino-acid biosynthesis; S-adenosyl-L-methionine biosynthesis; S-adenosyl-L-methionine from L-methionine: step 1/1. Functionally, catalyzes the formation of S-adenosylmethionine (AdoMet) from methionine and ATP. The overall synthetic reaction is composed of two sequential steps, AdoMet formation and the subsequent tripolyphosphate hydrolysis which occurs prior to release of AdoMet from the enzyme. This chain is S-adenosylmethionine synthase, found in Roseobacter denitrificans (strain ATCC 33942 / OCh 114) (Erythrobacter sp. (strain OCh 114)).